Reading from the N-terminus, the 349-residue chain is Draxin (349 aa).

Positions 1-25 are cleaved as a signal peptide; that stretch reads MAASSTFFSPSLFLCVLVLIDITLA. Residues 40-53 show a composition bias toward polar residues; sequence NHLQNQETWPQQPR. Disordered stretches follow at residues 40 to 63, 119 to 166, and 246 to 273; these read NHLQ…HGLA, PHAE…LYKK, and WPSA…EGEP. Over residues 54-63 the composition is skewed to basic residues; it reads SGHHHKHGLA. A compositionally biased stretch (basic and acidic residues) spans 119–139; that stretch reads PHAERENQSPGSERGKKQNRE. 2 stretches are compositionally biased toward basic residues: residues 140 to 155 and 249 to 258; these read QRRH…HRGK and AKKKEKRRSK. Asparagine 264 carries an N-linked (GlcNAc...) asparagine glycan.

The protein belongs to the draxin family.

It localises to the secreted. Functionally, chemorepulsive axon guidance protein required for the development of spinal cord and forebrain commissures. Acts as a chemorepulsive guidance protein for commissural axons during development. Able to inhibit or repel neurite outgrowth from dorsal spinal cord and cortical explants in vitro. Binds directly to the neurites and growth cones. The protein is Draxin of Gallus gallus (Chicken).